Consider the following 166-residue polypeptide: Protein C (166 aa).

The segment at 17 to 42 is disordered; that stretch reads YKRHTDDQASNNQVPKTGQEHGRTSC.

Its function is as follows. May counteract the cellular interferon antiviral system. This Hendra virus (isolate Horse/Autralia/Hendra/1994) protein is Protein C (P/V/C).